Reading from the N-terminus, the 180-residue chain is Large ribosomal subunit protein uL5c (180 aa).

This sequence belongs to the universal ribosomal protein uL5 family. In terms of assembly, part of the 50S ribosomal subunit; contacts the 5S rRNA.

Its subcellular location is the plastid. It localises to the chloroplast. Binds 5S rRNA, forms part of the central protuberance of the 50S subunit. In Oltmannsiellopsis viridis (Marine flagellate), this protein is Large ribosomal subunit protein uL5c (rpl5).